The following is a 177-amino-acid chain: Bifunctional protein PyrR (177 aa).

The short motif at 99 to 111 (VILIDDVLYTGRT) is the PRPP-binding element.

It belongs to the purine/pyrimidine phosphoribosyltransferase family. PyrR subfamily. In terms of assembly, homodimer and homohexamer; in equilibrium.

It carries out the reaction UMP + diphosphate = 5-phospho-alpha-D-ribose 1-diphosphate + uracil. In terms of biological role, regulates transcriptional attenuation of the pyrimidine nucleotide (pyr) operon by binding in a uridine-dependent manner to specific sites on pyr mRNA. This disrupts an antiterminator hairpin in the RNA and favors formation of a downstream transcription terminator, leading to a reduced expression of downstream genes. Also displays a weak uracil phosphoribosyltransferase activity which is not physiologically significant. The chain is Bifunctional protein PyrR from Pediococcus pentosaceus (strain ATCC 25745 / CCUG 21536 / LMG 10740 / 183-1w).